Consider the following 284-residue polypeptide: GPN-loop GTPase 3 (284 aa).

13–18 (GSGKST) serves as a coordination point for GTP. A Gly-Pro-Asn (GPN)-loop; involved in dimer interface motif is present at residues 72–74 (GPN). 174–177 (TKMD) contacts GTP. Residues 262-284 (EPREHEEESSSMFDEYFQERQNE) form a disordered region.

Belongs to the GPN-loop GTPase family. Heterodimer with GPN1. Binds to RNA polymerase II (RNAPII). Interacts directly with subunits RPB4 and RPB7 and the CTD of RPB1.

Small GTPase required for proper localization of RNA polymerase II (RNAPII). May act at an RNAP assembly step prior to nuclear import. This is GPN-loop GTPase 3 from Mus musculus (Mouse).